A 691-amino-acid polypeptide reads, in one-letter code: L-type lectin-domain containing receptor kinase S.6 (691 aa).

An N-terminal signal peptide occupies residues Met-1–Ser-25. Over His-26–Ser-311 the chain is Extracellular. A legume-lectin like region spans residues Arg-27–Arg-257. Residues Asn-34 and Asn-89 are each glycosylated (N-linked (GlcNAc...) asparagine). The chain crosses the membrane as a helical span at residues Leu-312 to Cys-332. Over Gly-333 to Ser-691 the chain is Cytoplasmic. A Protein kinase domain is found at Phe-366 to Leu-653. ATP contacts are provided by residues Val-372 to Val-380 and Lys-394. Asp-500 serves as the catalytic Proton acceptor.

In the C-terminal section; belongs to the protein kinase superfamily. Ser/Thr protein kinase family. This sequence in the N-terminal section; belongs to the leguminous lectin family.

It localises to the cell membrane. The enzyme catalyses L-seryl-[protein] + ATP = O-phospho-L-seryl-[protein] + ADP + H(+). The catalysed reaction is L-threonyl-[protein] + ATP = O-phospho-L-threonyl-[protein] + ADP + H(+). Involved in resistance response to the pathogenic oomycetes Phytophthora infestans and Phytophthora capsici and to the pathogenic bacteria Pseudomonas syringae. The sequence is that of L-type lectin-domain containing receptor kinase S.6 from Arabidopsis thaliana (Mouse-ear cress).